We begin with the raw amino-acid sequence, 146 residues long: Large ribosomal subunit protein uL15 (146 aa).

Residues 1-45 form a disordered region; that stretch reads MTIKLHHLRPAPGSKTERTRVGRGEGSKGKTAGRGTKGTKARKNV. A compositionally biased stretch (basic and acidic residues) spans 15-28; sequence KTERTRVGRGEGSK.

Belongs to the universal ribosomal protein uL15 family. As to quaternary structure, part of the 50S ribosomal subunit.

Binds to the 23S rRNA. The protein is Large ribosomal subunit protein uL15 of Mycobacteroides abscessus (strain ATCC 19977 / DSM 44196 / CCUG 20993 / CIP 104536 / JCM 13569 / NCTC 13031 / TMC 1543 / L948) (Mycobacterium abscessus).